Consider the following 160-residue polypeptide: Small ribosomal subunit protein uS7 (160 aa).

Belongs to the universal ribosomal protein uS7 family. As to quaternary structure, part of the 30S ribosomal subunit. Contacts proteins S9 and S11.

Its function is as follows. One of the primary rRNA binding proteins, it binds directly to 16S rRNA where it nucleates assembly of the head domain of the 30S subunit. Is located at the subunit interface close to the decoding center, probably blocks exit of the E-site tRNA. The chain is Small ribosomal subunit protein uS7 from Rickettsia prowazekii (strain Madrid E).